The chain runs to 355 residues: S-adenosylmethionine:tRNA ribosyltransferase-isomerase (355 aa).

This sequence belongs to the QueA family. In terms of assembly, monomer.

The protein resides in the cytoplasm. The catalysed reaction is 7-aminomethyl-7-carbaguanosine(34) in tRNA + S-adenosyl-L-methionine = epoxyqueuosine(34) in tRNA + adenine + L-methionine + 2 H(+). It functions in the pathway tRNA modification; tRNA-queuosine biosynthesis. Its function is as follows. Transfers and isomerizes the ribose moiety from AdoMet to the 7-aminomethyl group of 7-deazaguanine (preQ1-tRNA) to give epoxyqueuosine (oQ-tRNA). This Jannaschia sp. (strain CCS1) protein is S-adenosylmethionine:tRNA ribosyltransferase-isomerase.